A 365-amino-acid chain; its full sequence is tRNA-specific 2-thiouridylase MnmA (365 aa).

ATP-binding positions include Ala14–Ser21 and Leu40. Cys108 serves as the catalytic Nucleophile. A disulfide bridge links Cys108 with Cys204. An ATP-binding site is contributed by Gly132. Positions Lys154–Gln156 are interaction with tRNA. Residue Cys204 is the Cysteine persulfide intermediate of the active site.

The protein belongs to the MnmA/TRMU family.

Its subcellular location is the cytoplasm. It carries out the reaction S-sulfanyl-L-cysteinyl-[protein] + uridine(34) in tRNA + AH2 + ATP = 2-thiouridine(34) in tRNA + L-cysteinyl-[protein] + A + AMP + diphosphate + H(+). Its function is as follows. Catalyzes the 2-thiolation of uridine at the wobble position (U34) of tRNA, leading to the formation of s(2)U34. This is tRNA-specific 2-thiouridylase MnmA from Rickettsia felis (strain ATCC VR-1525 / URRWXCal2) (Rickettsia azadi).